The chain runs to 761 residues: Protein ACTIVITY OF BC1 COMPLEX KINASE 8, chloroplastic (761 aa).

Residues 1–57 (MATSSSSSSSLLLPNINFNSRQSPTITRSVSIAGIFLPRNRLSYNHNLRIRTRLIRA) constitute a chloroplast transit peptide. The Protein kinase domain maps to 288–648 (RFDYEPIAAA…VKDLRKRWDR (361 aa)). Residues 294–302 (IAAASLGQV) and Lys315 each bind ATP. Asp452 (proton acceptor) is an active-site residue. The chain crosses the membrane as a helical span at residues 725 to 745 (PATIAYTVCAFFSLQVLIGII).

Belongs to the protein kinase superfamily. ADCK protein kinase family. In terms of tissue distribution, mostly expressed in leaves and flowers, and, to a lower extent, in stems, siliques and roots.

It localises to the plastid. Its subcellular location is the chloroplast envelope. The protein localises to the chloroplast membrane. The enzyme catalyses L-seryl-[protein] + ATP = O-phospho-L-seryl-[protein] + ADP + H(+). It catalyses the reaction L-threonyl-[protein] + ATP = O-phospho-L-threonyl-[protein] + ADP + H(+). Its function is as follows. Involved in resistance to oxidative stress (e.g. hydrogen peroxide H(2)O(2)), high light and heavy metals (e.g. cadmium ions Cd(2+)). Influences responses to reactive oxygen species (ROS) production. Together with SIA1, regulates iron distribution within the chloroplast and mediates the oxidative stress response. Together with ABC1K7, influences chloroplast lipid synthesis/accumulation and modulates chloroplast membrane composition in response to stress. The chain is Protein ACTIVITY OF BC1 COMPLEX KINASE 8, chloroplastic from Arabidopsis thaliana (Mouse-ear cress).